The following is a 146-amino-acid chain: Putative pre-16S rRNA nuclease (146 aa).

The protein belongs to the YqgF nuclease family.

Its subcellular location is the cytoplasm. In terms of biological role, could be a nuclease involved in processing of the 5'-end of pre-16S rRNA. This chain is Putative pre-16S rRNA nuclease, found in Methylobacillus flagellatus (strain ATCC 51484 / DSM 6875 / VKM B-1610 / KT).